A 383-amino-acid chain; its full sequence is Neuropeptide Y receptor type 1 (383 aa).

Residues 1 to 44 (MNSTLSSQVENHSIYYNFSEKNSQFLAFENDDCHLPLAMIFTLA) are Extracellular-facing. N-linked (GlcNAc...) asparagine glycans are attached at residues N2, N11, and N17. The helical transmembrane segment at 45–65 (LAYGAVIILGVSGNLALIIII) threads the bilayer. The Cytoplasmic portion of the chain corresponds to 66–76 (LKQKEMRNVTN). The helical transmembrane segment at 77–97 (ILIVNLSFSDLLVAIMCLPFT) threads the bilayer. Over 98-116 (FVYTLMDHWVFGEVMCKLN) the chain is Extracellular. C113 and C198 are disulfide-bonded. A helical transmembrane segment spans residues 117–137 (PFVQCVSITVSIFSLVLIAVE). Residues 138–154 (RHQLIINPRGWRPSNRH) are Cytoplasmic-facing. Residues 155–175 (AYVGIAVIWVLAVASSLPFLI) form a helical membrane-spanning segment. At 176 to 211 (YQVLTDEPFQNVTLDAFKDKYVCFDKFLSDSHRLSY) the chain is on the extracellular side. Residues 212–232 (TTLLLVLQYFGPLCFIFICYF) form a helical membrane-spanning segment. The Cytoplasmic portion of the chain corresponds to 233–260 (KIYIRLKRRNNMMDKMRDNKYRSSETKR). Residues 261–281 (INVMLLSIVVAFAVCWLPLTI) form a helical membrane-spanning segment. The Extracellular segment spans residues 282–299 (FNTVFDWNHQIIATCNHN). Residues 300–320 (LLFLLCHLTAMISTCINPIFY) form a helical membrane-spanning segment. Residues 321 to 383 (GFLNKNFQRD…KIHSDDNEKI (63 aa)) lie on the Cytoplasmic side of the membrane. The S-palmitoyl cysteine moiety is linked to residue C338. The residue at position 368 (S368) is a Phosphoserine.

It belongs to the G-protein coupled receptor 1 family.

It localises to the cell membrane. Its function is as follows. Receptor for neuropeptide Y and peptide YY. This chain is Neuropeptide Y receptor type 1 (NPY1R), found in Sus scrofa (Pig).